The primary structure comprises 433 residues: GTPase Der (433 aa).

EngA-type G domains follow at residues 3–167 (KIVS…DKNI) and 175–349 (PRIA…FNLR). GTP is bound by residues 9–16 (GRPNVGKS), 56–60 (DTGGY), 119–122 (NKID), 181–188 (GRPNVGKS), 228–232 (DTAGI), and 293–296 (NKWD). A KH-like domain is found at 350–433 (LRIKTSLLNK…IPIKILFRLK (84 aa)).

It belongs to the TRAFAC class TrmE-Era-EngA-EngB-Septin-like GTPase superfamily. EngA (Der) GTPase family. In terms of assembly, associates with the 50S ribosomal subunit.

GTPase that plays an essential role in the late steps of ribosome biogenesis. This is GTPase Der from Karelsulcia muelleri (strain GWSS) (Sulcia muelleri).